Reading from the N-terminus, the 310-residue chain is Cytosolic Fe-S cluster assembly factor NUBP1 homolog (310 aa).

C12, C26, C29, and C35 together coordinate [4Fe-4S] cluster. G66–S73 is a binding site for ATP. 2 residues coordinate [4Fe-4S] cluster: C240 and C243.

It belongs to the Mrp/NBP35 ATP-binding proteins family. NUBP1/NBP35 subfamily. As to quaternary structure, heterotetramer of 2 NUBP1 and 2 NUBP2 chains. Requires [4Fe-4S] cluster as cofactor.

It localises to the cytoplasm. Its function is as follows. Component of the cytosolic iron-sulfur (Fe/S) protein assembly (CIA) machinery. Required for maturation of extramitochondrial Fe-S proteins. The NUBP1-NUBP2 heterotetramer forms a Fe-S scaffold complex, mediating the de novo assembly of an Fe-S cluster and its transfer to target apoproteins. The chain is Cytosolic Fe-S cluster assembly factor NUBP1 homolog from Brugia malayi (Filarial nematode worm).